The sequence spans 209 residues: MDLHNIRADYTKQQLSKKECDANPMKQFERWLNEAIMAKVNEPTAMNMATVIDGKPTSRIVLLKEVDQQGFIFFTNYQSCKGWAIALNPYVALTFFWPELERSVRVEGIATKLSEQASDDYFASRPYASRIGAWASDQSQVLSSKRTLVAKVALLSAKYPLFVPRPAHWGGYLVQPTKIEFWQGRPSWLHDRICYWLVENEWLKERLSP.

Residues 7-10 (RADY) and lysine 64 each bind substrate. Residues 59 to 64 (RIVLLK), 74 to 75 (FT), and lysine 81 contribute to the FMN site. The substrate site is built by tyrosine 121, arginine 125, and serine 129. FMN-binding positions include 138–139 (QS), tryptophan 182, and arginine 192.

Belongs to the pyridoxamine 5'-phosphate oxidase family. As to quaternary structure, homodimer. Requires FMN as cofactor.

The enzyme catalyses pyridoxamine 5'-phosphate + O2 + H2O = pyridoxal 5'-phosphate + H2O2 + NH4(+). It carries out the reaction pyridoxine 5'-phosphate + O2 = pyridoxal 5'-phosphate + H2O2. Its pathway is cofactor metabolism; pyridoxal 5'-phosphate salvage; pyridoxal 5'-phosphate from pyridoxamine 5'-phosphate: step 1/1. The protein operates within cofactor metabolism; pyridoxal 5'-phosphate salvage; pyridoxal 5'-phosphate from pyridoxine 5'-phosphate: step 1/1. Its function is as follows. Catalyzes the oxidation of either pyridoxine 5'-phosphate (PNP) or pyridoxamine 5'-phosphate (PMP) into pyridoxal 5'-phosphate (PLP). The polypeptide is Pyridoxine/pyridoxamine 5'-phosphate oxidase (Haemophilus ducreyi (strain 35000HP / ATCC 700724)).